The primary structure comprises 257 residues: NAD kinase (257 aa).

Asp46 acts as the Proton acceptor in catalysis. Residues 46–47 (DG), 116–117 (NE), Asp146, Ala154, and 157–162 (TAYNLS) each bind NAD(+).

This sequence belongs to the NAD kinase family. Requires a divalent metal cation as cofactor.

It is found in the cytoplasm. It catalyses the reaction NAD(+) + ATP = ADP + NADP(+) + H(+). Functionally, involved in the regulation of the intracellular balance of NAD and NADP, and is a key enzyme in the biosynthesis of NADP. Catalyzes specifically the phosphorylation on 2'-hydroxyl of the adenosine moiety of NAD to yield NADP. The protein is NAD kinase of Mesorhizobium japonicum (strain LMG 29417 / CECT 9101 / MAFF 303099) (Mesorhizobium loti (strain MAFF 303099)).